Here is a 449-residue protein sequence, read N- to C-terminus: Cortexillin-2 (449 aa).

Residues 1–231 (MTDLHKEWEK…ILYTSLFFHA (231 aa)) are actin-binding. Calponin-homology (CH) domains are found at residues 10–119 (KVQE…RKYR) and 128–233 (KSSE…HAYR). Coiled coils occupy residues 232-364 (YRAK…AEGL) and 408-441 (QFEE…LKSA).

It belongs to the cortexillin family. Homodimer; parallel.

The protein resides in the cytoplasm. It is found in the cytoskeleton. Actin-bundling protein. When linked to F-actin the actin filaments form preferentially anti-parallel bundles that associate into meshworks. Plays a major role in cytokinesis. This Heterostelium pallidum (strain ATCC 26659 / Pp 5 / PN500) (Cellular slime mold) protein is Cortexillin-2 (ctxB).